The following is a 344-amino-acid chain: Methionine import ATP-binding protein MetN (344 aa).

Residues 2–241 (IEINRVNKVF…PKTELARKFI (240 aa)) enclose the ABC transporter domain. 38-45 (GSSGAGKS) is an ATP binding site.

This sequence belongs to the ABC transporter superfamily. Methionine importer (TC 3.A.1.24) family. In terms of assembly, the complex is composed of two ATP-binding proteins (MetN), two transmembrane proteins (MetI) and a solute-binding protein (MetQ).

The protein localises to the cell inner membrane. The enzyme catalyses L-methionine(out) + ATP + H2O = L-methionine(in) + ADP + phosphate + H(+). It carries out the reaction D-methionine(out) + ATP + H2O = D-methionine(in) + ADP + phosphate + H(+). In terms of biological role, part of the ABC transporter complex MetNIQ involved in methionine import. Responsible for energy coupling to the transport system. The protein is Methionine import ATP-binding protein MetN of Photobacterium profundum (strain SS9).